Here is a 323-residue protein sequence, read N- to C-terminus: Oligodendrocyte transcription factor 2 (323 aa).

Residues 1 to 13 (MDSDASLVSSRPS) are compositionally biased toward polar residues. Residues 1 to 107 (MDSDASLVSS…KKQMTEPELQ (107 aa)) form a disordered region. Positions 77-93 (SSSSSTSSSTSSAATSS) are enriched in low complexity. The region spanning 108–162 (QLRLKINSRERKRMHDLNIAMDGLREVMPYAHGPSVRKLSKIATLLLARNYILML) is the bHLH domain.

In terms of assembly, interacts with NKX2-2. Interacts with ZNF488. Expressed specifically in the brain.

The protein localises to the nucleus. Its subcellular location is the cytoplasm. Its function is as follows. Required for oligodendrocyte and motor neuron specification in the spinal cord, as well as for the development of somatic motor neurons in the hindbrain. Functions together with ZNF488 to promote oligodendrocyte differentiation. Cooperates with OLIG1 to establish the pMN domain of the embryonic neural tube. Antagonist of V2 interneuron and of NKX2-2-induced V3 interneuron development. The sequence is that of Oligodendrocyte transcription factor 2 (Olig2) from Mus musculus (Mouse).